Reading from the N-terminus, the 734-residue chain is Homoaconitase, mitochondrial (734 aa).

Residues 1 to 25 (MGASNLLRFGAVTRISTPLLSRRSL) constitute a mitochondrion transit peptide. Cys367, Cys427, and Cys430 together coordinate [4Fe-4S] cluster.

The protein belongs to the aconitase/IPM isomerase family. It depends on [4Fe-4S] cluster as a cofactor.

The protein localises to the mitochondrion. The enzyme catalyses (2R,3S)-homoisocitrate = cis-homoaconitate + H2O. It participates in amino-acid biosynthesis; L-lysine biosynthesis via AAA pathway; L-alpha-aminoadipate from 2-oxoglutarate: step 3/5. In terms of biological role, catalyzes the reversible hydration of cis-homoaconitate to (2R,3S)-homoisocitrate, a step in the alpha-aminoadipate pathway for lysine biosynthesis. This chain is Homoaconitase, mitochondrial (LYS4), found in Mycosarcoma maydis (Corn smut fungus).